A 280-amino-acid chain; its full sequence is Shikimate dehydrogenase (NADP(+)) (280 aa).

Shikimate contacts are provided by residues 19–21 (SFS) and threonine 66. Lysine 70 (proton acceptor) is an active-site residue. Glutamate 82 lines the NADP(+) pocket. The shikimate site is built by asparagine 91 and aspartate 106. Residues 130 to 134 (GSGGA) and leucine 222 contribute to the NADP(+) site. A shikimate-binding site is contributed by tyrosine 224. Glycine 245 contributes to the NADP(+) binding site.

This sequence belongs to the shikimate dehydrogenase family. Homodimer.

The enzyme catalyses shikimate + NADP(+) = 3-dehydroshikimate + NADPH + H(+). The protein operates within metabolic intermediate biosynthesis; chorismate biosynthesis; chorismate from D-erythrose 4-phosphate and phosphoenolpyruvate: step 4/7. Involved in the biosynthesis of the chorismate, which leads to the biosynthesis of aromatic amino acids. Catalyzes the reversible NADPH linked reduction of 3-dehydroshikimate (DHSA) to yield shikimate (SA). The chain is Shikimate dehydrogenase (NADP(+)) from Methanococcus maripaludis (strain C7 / ATCC BAA-1331).